A 699-amino-acid chain; its full sequence is Glutamine--fructose-6-phosphate aminotransferase [isomerizing] (699 aa).

Cys2 acts as the Nucleophile in catalysis. The Glutamine amidotransferase type-2 domain maps to 2–303 (CGIFGYANFS…DNDIVHISNG (302 aa)). SIS domains lie at 377 to 516 (HVSG…QNLV) and 544 to 689 (SVKS…ADFP).

The catalysed reaction is D-fructose 6-phosphate + L-glutamine = D-glucosamine 6-phosphate + L-glutamate. Its pathway is nucleotide-sugar biosynthesis; UDP-N-acetyl-alpha-D-glucosamine biosynthesis; alpha-D-glucosamine 6-phosphate from D-fructose 6-phosphate: step 1/1. Functionally, involved in amino sugar synthesis (formation of chitin, supplies the amino sugars of asparagine-linked oligosaccharides of glycoproteins). This is Glutamine--fructose-6-phosphate aminotransferase [isomerizing] (GFA1) from Encephalitozoon cuniculi (strain GB-M1) (Microsporidian parasite).